A 377-amino-acid polypeptide reads, in one-letter code: Chaperone protein DnaJ (377 aa).

One can recognise a J domain in the interval 5–70 (DYYQILGIPK…EKRSAYDQYG (66 aa)). The segment at 132–210 (GIKKEIQIPT…CHGQGRVETY (79 aa)) adopts a CR-type zinc-finger fold. Residues C145, C148, C162, C165, C184, C187, C198, and C201 each contribute to the Zn(2+) site. 4 CXXCXGXG motif repeats span residues 145 to 152 (CKTCYGSG), 162 to 169 (CSTCHGKG), 184 to 191 (CPTCHGKG), and 198 to 205 (CNLCHGQG).

The protein belongs to the DnaJ family. As to quaternary structure, homodimer. Zn(2+) serves as cofactor.

The protein resides in the cytoplasm. Functionally, participates actively in the response to hyperosmotic and heat shock by preventing the aggregation of stress-denatured proteins and by disaggregating proteins, also in an autonomous, DnaK-independent fashion. Unfolded proteins bind initially to DnaJ; upon interaction with the DnaJ-bound protein, DnaK hydrolyzes its bound ATP, resulting in the formation of a stable complex. GrpE releases ADP from DnaK; ATP binding to DnaK triggers the release of the substrate protein, thus completing the reaction cycle. Several rounds of ATP-dependent interactions between DnaJ, DnaK and GrpE are required for fully efficient folding. Also involved, together with DnaK and GrpE, in the DNA replication of plasmids through activation of initiation proteins. The chain is Chaperone protein DnaJ from Buchnera aphidicola subsp. Acyrthosiphon pisum (strain 5A).